The primary structure comprises 288 residues: NAD(P)H-hydrate epimerase (288 aa).

The N-terminal 32 residues, 1–32 (MSGLRALLGLGLLVAGSRLSRVRVQAGSCRAG), are a transit peptide targeting the mitochondrion. At Ser49 the chain carries Phosphoserine. The region spanning 65–275 (AQAVDQELFN…ALEKKYQLNL (211 aa)) is the YjeF N-terminal domain. Position 119–123 (119–123 (NNGGD)) interacts with (6S)-NADPHX. Asn120 is a K(+) binding site. Lys144 bears the N6-succinyllysine mark. Asp185 is a binding site for K(+). Residues 189-195 (GFSFTGE) and Asp218 each bind (6S)-NADPHX. Ser221 is a K(+) binding site.

Belongs to the NnrE/AIBP family. Homodimer. Interacts with APOA1 and APOA2. K(+) is required as a cofactor. In terms of processing, undergoes physiological phosphorylation during sperm capacitation, downstream to PKA activation.

The protein localises to the mitochondrion. It localises to the secreted. The enzyme catalyses (6R)-NADHX = (6S)-NADHX. It carries out the reaction (6R)-NADPHX = (6S)-NADPHX. Its function is as follows. Catalyzes the epimerization of the S- and R-forms of NAD(P)HX, a damaged form of NAD(P)H that is a result of enzymatic or heat-dependent hydration. This is a prerequisite for the S-specific NAD(P)H-hydrate dehydratase to allow the repair of both epimers of NAD(P)HX. Accelerates cholesterol efflux from endothelial cells to high-density lipoprotein (HDL) and thereby regulates angiogenesis. The sequence is that of NAD(P)H-hydrate epimerase from Bos taurus (Bovine).